We begin with the raw amino-acid sequence, 31 residues long: Cytochrome b6-f complex subunit 6 (31 aa).

A helical transmembrane segment spans residues 4 to 24 (LTSYFGFLLAALTITLALFIG).

The protein belongs to the PetL family. In terms of assembly, the 4 large subunits of the cytochrome b6-f complex are cytochrome b6, subunit IV (17 kDa polypeptide, PetD), cytochrome f and the Rieske protein, while the 4 small subunits are PetG, PetL, PetM and PetN. The complex functions as a dimer.

The protein localises to the plastid. Its subcellular location is the chloroplast thylakoid membrane. Component of the cytochrome b6-f complex, which mediates electron transfer between photosystem II (PSII) and photosystem I (PSI), cyclic electron flow around PSI, and state transitions. PetL is important for photoautotrophic growth as well as for electron transfer efficiency and stability of the cytochrome b6-f complex. This is Cytochrome b6-f complex subunit 6 from Triticum aestivum (Wheat).